Here is a 704-residue protein sequence, read N- to C-terminus: Polyribonucleotide nucleotidyltransferase (704 aa).

Mg(2+) contacts are provided by aspartate 486 and aspartate 492. The region spanning 553 to 612 is the KH domain; it reads PKIVIVKINPDKIRDVIGPGGKQINKIIEETGVKIDTEQDGTIYISSANEEMNARAKQII. One can recognise an S1 motif domain in the interval 622 to 690; it reads GEYYLSTVKR…KQGRVNLSRK (69 aa).

The protein belongs to the polyribonucleotide nucleotidyltransferase family. Mg(2+) serves as cofactor.

Its subcellular location is the cytoplasm. It carries out the reaction RNA(n+1) + phosphate = RNA(n) + a ribonucleoside 5'-diphosphate. Functionally, involved in mRNA degradation. Catalyzes the phosphorolysis of single-stranded polyribonucleotides processively in the 3'- to 5'-direction. The protein is Polyribonucleotide nucleotidyltransferase of Lysinibacillus sphaericus (strain C3-41).